Here is an 82-residue protein sequence, read N- to C-terminus: Small ribosomal subunit protein bS16 (82 aa).

It belongs to the bacterial ribosomal protein bS16 family.

The chain is Small ribosomal subunit protein bS16 from Tolumonas auensis (strain DSM 9187 / NBRC 110442 / TA 4).